The following is a 306-amino-acid chain: UDP-3-O-acyl-N-acetylglucosamine deacetylase (306 aa).

3 residues coordinate Zn(2+): His-78, His-237, and Asp-241. His-264 (proton donor) is an active-site residue.

The protein belongs to the LpxC family. Zn(2+) serves as cofactor.

The enzyme catalyses a UDP-3-O-[(3R)-3-hydroxyacyl]-N-acetyl-alpha-D-glucosamine + H2O = a UDP-3-O-[(3R)-3-hydroxyacyl]-alpha-D-glucosamine + acetate. It participates in glycolipid biosynthesis; lipid IV(A) biosynthesis; lipid IV(A) from (3R)-3-hydroxytetradecanoyl-[acyl-carrier-protein] and UDP-N-acetyl-alpha-D-glucosamine: step 2/6. In terms of biological role, catalyzes the hydrolysis of UDP-3-O-myristoyl-N-acetylglucosamine to form UDP-3-O-myristoylglucosamine and acetate, the committed step in lipid A biosynthesis. The protein is UDP-3-O-acyl-N-acetylglucosamine deacetylase of Aromatoleum aromaticum (strain DSM 19018 / LMG 30748 / EbN1) (Azoarcus sp. (strain EbN1)).